Reading from the N-terminus, the 468-residue chain is Ribulose bisphosphate carboxylase large chain (468 aa).

Lys5 is modified (N6,N6,N6-trimethyllysine). Residues Asn114 and Thr164 each contribute to the substrate site. Catalysis depends on Lys166, which acts as the Proton acceptor. Lys168 lines the substrate pocket. 3 residues coordinate Mg(2+): Lys192, Asp194, and Glu195. Position 192 is an N6-carboxylysine (Lys192). The active-site Proton acceptor is the His285. Positions 286, 318, and 370 each coordinate substrate.

This sequence belongs to the RuBisCO large chain family. Type I subfamily. As to quaternary structure, heterohexadecamer of 8 large chains and 8 small chains; disulfide-linked. The disulfide link is formed within the large subunit homodimers. It depends on Mg(2+) as a cofactor. In terms of processing, the disulfide bond which can form in the large chain dimeric partners within the hexadecamer appears to be associated with oxidative stress and protein turnover.

Its subcellular location is the plastid. The protein resides in the chloroplast. The catalysed reaction is 2 (2R)-3-phosphoglycerate + 2 H(+) = D-ribulose 1,5-bisphosphate + CO2 + H2O. It carries out the reaction D-ribulose 1,5-bisphosphate + O2 = 2-phosphoglycolate + (2R)-3-phosphoglycerate + 2 H(+). RuBisCO catalyzes two reactions: the carboxylation of D-ribulose 1,5-bisphosphate, the primary event in carbon dioxide fixation, as well as the oxidative fragmentation of the pentose substrate in the photorespiration process. Both reactions occur simultaneously and in competition at the same active site. In Anthospermum herbaceum, this protein is Ribulose bisphosphate carboxylase large chain.